Consider the following 176-residue polypeptide: Shikimate kinase (176 aa).

Residue 12 to 17 (GSGKST) coordinates ATP. Ser-16 is a binding site for Mg(2+). Residues Asp-34, Arg-58, and Gly-80 each contribute to the substrate site. Residue Arg-117 participates in ATP binding. Arg-136 is a substrate binding site. An ATP-binding site is contributed by Arg-153.

Belongs to the shikimate kinase family. In terms of assembly, monomer. Mg(2+) is required as a cofactor.

It is found in the cytoplasm. It carries out the reaction shikimate + ATP = 3-phosphoshikimate + ADP + H(+). Its pathway is metabolic intermediate biosynthesis; chorismate biosynthesis; chorismate from D-erythrose 4-phosphate and phosphoenolpyruvate: step 5/7. Catalyzes the specific phosphorylation of the 3-hydroxyl group of shikimic acid using ATP as a cosubstrate. The sequence is that of Shikimate kinase from Mycobacterium avium (strain 104).